A 668-amino-acid chain; its full sequence is Eukaryotic translation initiation factor 3 subunit L (668 aa).

Residues 1-17 (MVADASQQGQSNGAAFN) are compositionally biased toward polar residues. A disordered region spans residues 1–42 (MVADASQQGQSNGAAFNQQQQYQQQQQRQLFGGEEEFGDEEE). Over residues 18-32 (QQQQYQQQQQRQLFG) the composition is skewed to low complexity. The segment covering 33 to 42 (GEEEFGDEEE) has biased composition (acidic residues). Positions 358–552 (SFTHILVFIM…QVVNTSDLDF (195 aa)) constitute a PCI domain. Residues 625–668 (AGVKAGPPAFSQRSGGAGRSSVNKSAPAPAGAWGSSKPQPSVTA) form a disordered region. Low complexity predominate over residues 648–662 (KSAPAPAGAWGSSKP).

The protein belongs to the eIF-3 subunit L family. In terms of assembly, component of the eukaryotic translation initiation factor 3 (eIF-3) complex.

The protein resides in the cytoplasm. Its function is as follows. Component of the eukaryotic translation initiation factor 3 (eIF-3) complex, which is involved in protein synthesis of a specialized repertoire of mRNAs and, together with other initiation factors, stimulates binding of mRNA and methionyl-tRNAi to the 40S ribosome. The eIF-3 complex specifically targets and initiates translation of a subset of mRNAs involved in cell proliferation. This is Eukaryotic translation initiation factor 3 subunit L from Mycosarcoma maydis (Corn smut fungus).